The primary structure comprises 362 residues: 3-isopropylmalate dehydrogenase (362 aa).

78 to 91 lines the NAD(+) pocket; sequence GYKWDSLPPHQRPE. Substrate-binding residues include arginine 98, arginine 108, arginine 136, and aspartate 226. Mg(2+)-binding residues include aspartate 226, aspartate 250, and aspartate 254. 284–296 lines the NAD(+) pocket; the sequence is GSAPDIAGLDKAN.

This sequence belongs to the isocitrate and isopropylmalate dehydrogenases family. LeuB type 1 subfamily. In terms of assembly, homodimer. It depends on Mg(2+) as a cofactor. The cofactor is Mn(2+).

It localises to the cytoplasm. It carries out the reaction (2R,3S)-3-isopropylmalate + NAD(+) = 4-methyl-2-oxopentanoate + CO2 + NADH. It participates in amino-acid biosynthesis; L-leucine biosynthesis; L-leucine from 3-methyl-2-oxobutanoate: step 3/4. In terms of biological role, catalyzes the oxidation of 3-carboxy-2-hydroxy-4-methylpentanoate (3-isopropylmalate) to 3-carboxy-4-methyl-2-oxopentanoate. The product decarboxylates to 4-methyl-2 oxopentanoate. The polypeptide is 3-isopropylmalate dehydrogenase (Trichormus variabilis (strain ATCC 29413 / PCC 7937) (Anabaena variabilis)).